The following is a 420-amino-acid chain: Protein BDLF2 (420 aa).

Disordered stretches follow at residues 1–21 (MVDE…SREE) and 64–129 (AAAV…GGQR). Over 1-184 (MVDEQVAVEH…AETLAEPPRC (184 aa)) the chain is Intravirion. Low complexity predominate over residues 92 to 108 (TNTQDQNQNQTTRARTN). Residues 185–205 (FMLSFVFIYYCCYLAFLALLA) traverse the membrane as a helical; Signal-anchor for type II membrane protein segment. Residues 206–420 (FGFNPLFLPS…LEEVMYVMVQ (215 aa)) lie on the Virion surface side of the membrane. N-linked (GlcNAc...) asparagine; by host glycosylation is found at Asn-258, Asn-264, Asn-300, Asn-304, Asn-371, and Asn-384.

The protein belongs to the herpesviridae BDLF2 family. In terms of assembly, interacts with BMRF2.

Its subcellular location is the virion membrane. Functionally, rearranges cellular actin to increase intercellular contacts and thereby promote virus cell-to-cell spreading. Induce the outgrowth of long, branched plasma membrane fronds to create intercellular network for virion traffic. The fronds are actin based and RhoA-dependent. The sequence is that of Protein BDLF2 from Epstein-Barr virus (strain GD1) (HHV-4).